Here is an 841-residue protein sequence, read N- to C-terminus: ATP-dependent helicase Lhr-Core (841 aa).

Residues Gln-39, Lys-62, Thr-63, Asp-181, Glu-182, Ile-352, Arg-369, and His-372 each coordinate ATP. Positions 43-234 (IKEIHEGKNV…FLVGNGRDCY (192 aa)) constitute a Helicase ATP-binding domain. The short motif at 181–184 (DEIH) is the DEVH box element. Residues 266–416 (RLYNLLKKLI…RIHIPKNCLD (151 aa)) form the Helicase C-terminal domain. Positions 417 to 500 (VLAQHLVGMA…IYYMNVGTIP (84 aa)) are WH domain. A domain 4 region spans residues 501 to 841 (DETAVDVIAD…MEFISMKGKK (341 aa)).

The protein belongs to the Lhr helicase family. Lhr-Core subfamily. As to quaternary structure, monomer.

It carries out the reaction Couples ATP hydrolysis with the unwinding of duplex DNA by translocating in the 3'-5' direction.. The catalysed reaction is ATP + H2O = ADP + phosphate + H(+). Functionally, DNA helicase that loads on single-stranded (ss)DNA and translocates in a 3'-5' direction, probably involved in DNA repair. Archaeal orthologs have double-stranded (ds)DNA and/or RNA:DNA helicase activity. The sequence is that of ATP-dependent helicase Lhr-Core from Methanocaldococcus jannaschii (strain ATCC 43067 / DSM 2661 / JAL-1 / JCM 10045 / NBRC 100440) (Methanococcus jannaschii).